The sequence spans 184 residues: Putative NAD(P)H nitroreductase HI_1542 (184 aa).

Residues arginine 10 to serine 12, arginine 35, and histidine 39 contribute to the FMN site. Residue alanine 122–glycine 127 participates in NAD(+) binding. An FMN-binding site is contributed by tryptophan 132–serine 134.

The protein belongs to the nitroreductase family. Homodimer. FMN serves as cofactor.

The chain is Putative NAD(P)H nitroreductase HI_1542 from Haemophilus influenzae (strain ATCC 51907 / DSM 11121 / KW20 / Rd).